The primary structure comprises 110 residues: UPF0122 protein BPUM_1495 (110 aa).

The protein belongs to the UPF0122 family.

Might take part in the signal recognition particle (SRP) pathway. This is inferred from the conservation of its genetic proximity to ftsY/ffh. May be a regulatory protein. The protein is UPF0122 protein BPUM_1495 of Bacillus pumilus (strain SAFR-032).